The sequence spans 161 residues: MAFDASFFALVGLVLFFVLIAYLKVPGMLSKSLDERAQNIQDELAEAKRLREEAQHLLAEYQRKRKEAEAEAAGIVAAAEREAAALTEEAKQKTEEFVARRTALSEQKIKQAEEDAIGAVRAAAVDIAIAASEKLLAEKTTAAAKAKLFAATIGEVKSKLN.

The helical transmembrane segment at Phe-3–Leu-23 threads the bilayer.

It belongs to the ATPase B chain family. In terms of assembly, F-type ATPases have 2 components, F(1) - the catalytic core - and F(0) - the membrane proton channel. F(1) has five subunits: alpha(3), beta(3), gamma(1), delta(1), epsilon(1). F(0) has three main subunits: a(1), b(2) and c(10-14). The alpha and beta chains form an alternating ring which encloses part of the gamma chain. F(1) is attached to F(0) by a central stalk formed by the gamma and epsilon chains, while a peripheral stalk is formed by the delta and b chains.

It is found in the cell inner membrane. Its function is as follows. F(1)F(0) ATP synthase produces ATP from ADP in the presence of a proton or sodium gradient. F-type ATPases consist of two structural domains, F(1) containing the extramembraneous catalytic core and F(0) containing the membrane proton channel, linked together by a central stalk and a peripheral stalk. During catalysis, ATP synthesis in the catalytic domain of F(1) is coupled via a rotary mechanism of the central stalk subunits to proton translocation. In terms of biological role, component of the F(0) channel, it forms part of the peripheral stalk, linking F(1) to F(0). In Agrobacterium fabrum (strain C58 / ATCC 33970) (Agrobacterium tumefaciens (strain C58)), this protein is ATP synthase subunit b 1.